Consider the following 939-residue polypeptide: cGMP-dependent 3',5'-cyclic phosphodiesterase (939 aa).

The N-myristoyl glycine moiety is linked to residue Gly-2. Residues Cys-5 and Cys-11 are each lipidated (S-palmitoyl cysteine). The segment at 16–38 (YPAARPAEPRGQQVFLKPDEPPP) is disordered. Position 116 is a phosphoserine (Ser-116). The disordered stretch occupies residues 197–217 (PEAVQNTSVDASEDQKDEKGY). GAF domains lie at 236 to 373 (ATSL…HYTG) and 408 to 547 (DVSV…GISI). 3',5'-cyclic GMP-binding residues include Ser-430, Asp-445, Ile-464, Tyr-487, and Thr-498. Residues 577 to 901 (SDDEYTKLLH…EHWTKVSHKF (325 aa)) enclose the PDEase domain. Residue His-655 is the Proton donor of the active site. The Zn(2+) site is built by His-659, His-695, Asp-696, and Asp-807. Asp-696 is a Mg(2+) binding site.

The protein belongs to the cyclic nucleotide phosphodiesterase family. PDE2 subfamily. Homodimer. It depends on Zn(2+) as a cofactor. The cofactor is Mg(2+). In terms of tissue distribution, expressed in brain and liver (at protein level).

The protein resides in the cytoplasm. It localises to the mitochondrion matrix. Its subcellular location is the mitochondrion inner membrane. The protein localises to the mitochondrion outer membrane. It is found in the cell membrane. It catalyses the reaction a nucleoside 3',5'-cyclic phosphate + H2O = a nucleoside 5'-phosphate + H(+). It carries out the reaction 3',5'-cyclic GMP + H2O = GMP + H(+). The enzyme catalyses 3',5'-cyclic AMP + H2O = AMP + H(+). With respect to regulation, the 3',5'-cyclic-AMP phosphodiesterase activity is stimulated by 3',5'-cyclic GMP. Specifically inhibited by Bay 60-7550. Its function is as follows. cGMP-activated cyclic nucleotide phosphodiesterase with a dual-specificity for the second messengers cAMP and cGMP, which are key regulators of many important physiological processes. Has a higher efficiency with cGMP compared to cAMP. Plays a role in cell growth and migration. Functionally, regulates mitochondrial cAMP levels and respiration. Involved in the regulation of mitochondria morphology/dynamics and apoptotic cell death via local modulation of cAMP/PKA signaling in the mitochondrion, including the monitoring of local cAMP levels at the outer mitochondrial membrane and of PKA-dependent phosphorylation of DNM1L. The protein is cGMP-dependent 3',5'-cyclic phosphodiesterase of Mus musculus (Mouse).